The primary structure comprises 323 residues: Acetyl-coenzyme A carboxylase carboxyl transferase subunit alpha (323 aa).

Positions 39–293 constitute a CoA carboxyltransferase C-terminal domain; the sequence is RLAGKSQQLT…KRSLAESLRQ (255 aa).

This sequence belongs to the AccA family. In terms of assembly, acetyl-CoA carboxylase is a heterohexamer composed of biotin carboxyl carrier protein (AccB), biotin carboxylase (AccC) and two subunits each of ACCase subunit alpha (AccA) and ACCase subunit beta (AccD).

Its subcellular location is the cytoplasm. The enzyme catalyses N(6)-carboxybiotinyl-L-lysyl-[protein] + acetyl-CoA = N(6)-biotinyl-L-lysyl-[protein] + malonyl-CoA. It functions in the pathway lipid metabolism; malonyl-CoA biosynthesis; malonyl-CoA from acetyl-CoA: step 1/1. Its function is as follows. Component of the acetyl coenzyme A carboxylase (ACC) complex. First, biotin carboxylase catalyzes the carboxylation of biotin on its carrier protein (BCCP) and then the CO(2) group is transferred by the carboxyltransferase to acetyl-CoA to form malonyl-CoA. This is Acetyl-coenzyme A carboxylase carboxyl transferase subunit alpha from Cupriavidus necator (strain ATCC 17699 / DSM 428 / KCTC 22496 / NCIMB 10442 / H16 / Stanier 337) (Ralstonia eutropha).